Consider the following 135-residue polypeptide: Large ribosomal subunit protein uL16c (135 aa).

It belongs to the universal ribosomal protein uL16 family. In terms of assembly, part of the 50S ribosomal subunit.

The protein localises to the plastid. It localises to the chloroplast. The protein is Large ribosomal subunit protein uL16c of Platanus occidentalis (Sycamore).